A 61-amino-acid chain; its full sequence is MSRTSLEVKAKRKPKFSARAYNRCPICGRPRGYMRKFGICRICFRNMSLRGELPGVRKSSW.

Positions 24, 27, 40, and 43 each coordinate Zn(2+).

The protein belongs to the universal ribosomal protein uS14 family. Zinc-binding uS14 subfamily. As to quaternary structure, part of the 30S ribosomal subunit. Contacts proteins S3 and S10. It depends on Zn(2+) as a cofactor.

Binds 16S rRNA, required for the assembly of 30S particles and may also be responsible for determining the conformation of the 16S rRNA at the A site. The sequence is that of Small ribosomal subunit protein uS14 from Oleidesulfovibrio alaskensis (strain ATCC BAA-1058 / DSM 17464 / G20) (Desulfovibrio alaskensis).